The sequence spans 332 residues: Monoterpene synthase 25 (332 aa).

Mg(2+) contacts are provided by Asp-115, Glu-180, Asn-240, Ser-244, and Glu-248. Positions 115-121 match the DDXXXXD motif motif; sequence DDPVVFD. An NSE/DTE motif motif is present at residues 240 to 248; it reads NDILSFYKE.

This sequence belongs to the trichodiene synthase family. Requires Mg(2+) as cofactor.

Functionally, terpene cyclase that catalyzes the cyclization of geranyl diphosphate (GPP) to myrcene and linalool. This Postia placenta (strain ATCC 44394 / Madison 698-R) (Brown rot fungus) protein is Monoterpene synthase 25.